The sequence spans 429 residues: Prenyltransferase okaC (429 aa).

Dimethylallyl diphosphate is bound by residues arginine 101, lysine 189, tyrosine 191, lysine 257, tyrosine 259, tyrosine 342, tyrosine 406, and tyrosine 410.

Belongs to the tryptophan dimethylallyltransferase family.

It carries out the reaction cyclo(L-Trp-L-Trp) + 2 dimethylallyl diphosphate = cyclo(N(8)-(alpha,alpha-dimethylallyl)-L-Trp-6a-(alpha,alpha-dimethylallyl)-L-Trp) + 2 diphosphate. It participates in alkaloid biosynthesis. Prenyltransferase; part of the gene cluster that mediates the biosynthesis of okaramine B, a prenylated indole alkaloid that possesses an unusual octacyclic ring system, including a four-membered azetidine ring and an eight-membered azocine ring, and that exhibits insecticidal activity against silkworm larvae. Within the pathway, okaC performs asymmetric reverse prenylation of cyclo(L-Trp-L-Trp) at N-1 and C-2' of the indole ring to produce the cyclic prenylated tryptophan dimer cyclo(N8-(alpha,alpha-dimethylallyl)-L-Trp-6a-(alpha,alpha-dime-thylallyl)-L-Trp). The biosynthesis begins with the NRPS okaA that condenses two tryptophan molecules into cyclo(L-Trp-L-Trp). Prenylation by the prenyltransferase okaC then leads to the formation of cyclo(N8-(alpha,alpha-dimethylallyl)-L-Trp-6a-(alpha,alpha-dime-thylallyl)-L-Trp). This is followed by indole 2,3-epoxidation by the FAD-dependent monooxygenase okaB to facilitate the formation of the hexahydropyrrolo[2,3-b]indole (HPI) moiety of okaramine C. The cytochrome P450 monooxygenase okaD then likely catalyzes formation of the eight-membered ring of okaramine A. The dioxygenase okaE further forms the unusual 2-dimethyl-3-methyl-azetidine ring to yield 12-deshydroxyl okaramine E, as well as the hydroxylation of 12-deshydroxyl okaramine E to produce okaramine E. The cytochrome P450 monoxygenase okaG converts 12-deshydroxyl okaramine E into 3-desmethyl okaramine B which is further methylated by the methyltransferase okaF into okaramine B. In a shunt pathway, okaG and okaF together are also able to convert okaramine E into okaramine D. Okaramine H is produced by nonenzymatic conversion from okaramine A. The protein is Prenyltransferase okaC of Penicillium ochrochloron.